The chain runs to 442 residues: UPF0489 protein C5orf22 homolog (442 aa).

Residues 175–208 (SSAKKPKLALEDSRNTASTNCDSSSEGLEKDTAT) are disordered. Residues 189–200 (NTASTNCDSSSE) show a composition bias toward polar residues.

Belongs to the UPF0489 family.

This Pongo abelii (Sumatran orangutan) protein is UPF0489 protein C5orf22 homolog.